The sequence spans 325 residues: Solute-binding protein Bpro_4736 (325 aa).

Positions 1–27 (MKTRTLKVLKPTLALLLAASFSAGALA) are cleaved as a signal peptide. Residue 168–173 (RISPVY) participates in phenylglyoxylate binding.

Belongs to the bacterial solute-binding protein 7 family. The complex is comprised of an extracytoplasmic solute-binding protein and a heteromeric permease formed by two transmembrane proteins.

It is found in the periplasm. In terms of biological role, solute-binding protein that binds phenylglyoxylate (in vitro). Probably part of a tripartite ATP-independent periplasmic (TRAP) transport system that mediates solute transport into the cytoplasm. The chain is Solute-binding protein Bpro_4736 from Polaromonas sp. (strain JS666 / ATCC BAA-500).